Here is a 664-residue protein sequence, read N- to C-terminus: Kinesin-like protein KIF2B (664 aa).

Threonine 125 carries the post-translational modification Phosphothreonine; by PLK1. Positions 149-177 (CLREIEKLQKQREKRRRLQLEIRARRALD) form a coiled coil. Serine 204 carries the phosphoserine; by PLK1 modification. Residues 213-543 (RICVCVRKRP…LRYANRVKEL (331 aa)) form the Kinesin motor domain. ATP is bound at residue 303–310 (GQTGSGKT). Residues 583–607 (VQKEEEKESDELTSTKEPAASWSRS) form a disordered region. A coiled-coil region spans residues 642-663 (VLTEIQKKLQLLRDDLQKKSQA).

It belongs to the TRAFAC class myosin-kinesin ATPase superfamily. Kinesin family. MCAK/KIF2 subfamily. Post-translationally, phosphorylation at Thr-125 by PLK1 is required for activity in the correction of kinetochore-microtubules attachment errors, while phosphorylation at Ser-204 also by PLK1 is required for the kinetochore localization and activity in prometaphase.

Its subcellular location is the cytoplasm. It localises to the cytoskeleton. The protein resides in the microtubule organizing center. It is found in the centrosome. The protein localises to the spindle. Its subcellular location is the chromosome. It localises to the centromere. The protein resides in the kinetochore. Functionally, plus end-directed microtubule-dependent motor required for spindle assembly and chromosome movement. Has microtubule depolymerization activity. Plays a role in chromosome congression. The sequence is that of Kinesin-like protein KIF2B from Rattus norvegicus (Rat).